A 688-amino-acid polypeptide reads, in one-letter code: Subtilisin-like protease 1 (688 aa).

The N-terminal stretch at Met1–Gly25 is a signal peptide. The propeptide at Lys26 to Asp217 is inhibition peptide. The interval Glu99–Glu129 is disordered. Residues His106–Asn122 are compositionally biased toward low complexity. Asn112 carries N-linked (GlcNAc...) asparagine glycosylation. Residues Asn145, Thr148, and Pro150 each coordinate Ca(2+). Residue Asn171 is glycosylated (N-linked (GlcNAc...) asparagine). A Ca(2+)-binding site is contributed by Gly205. A glycan (N-linked (GlcNAc...) asparagine) is linked at Asn261. Disordered regions lie at residues His264 to Ser284 and Asn303 to Lys332. The segment covering Asn303 to Ser328 has biased composition (low complexity). N-linked (GlcNAc...) asparagine glycosylation is found at Asn317 and Asn322. Asp337 serves as a coordination point for Ca(2+). The Peptidase S8 domain occupies Gln343–Val661. Cystine bridges form between Cys369-Cys479 and Cys458-Cys475. Residue Asp372 is the Charge relay system of the active site. 11 residues coordinate Ca(2+): Asp381, Glu392, Arg396, Phe399, Asp400, Asp401, Asp402, Asn404, Ile406, Asp408, and Asp409. A glycan (N-linked (GlcNAc...) asparagine) is linked at Asn417. Residue His428 is the Charge relay system of the active site. Residues Ile439, Asn442, Ile444, and Val446 each coordinate Ca(2+). N-linked (GlcNAc...) asparagine glycans are attached at residues Asn488, Asn501, and Asn520. Cys521 and Cys534 are oxidised to a cystine. Asn603 carries an N-linked (GlcNAc...) asparagine glycan. Ser606 acts as the Charge relay system in catalysis. A glycan (N-linked (GlcNAc...) asparagine) is linked at Asn675.

This sequence belongs to the peptidase S8 family. In terms of assembly, heterodimer between p54 form and prodomain p31; the interaction inhibits p54 catalytic activity. Heterodimer p31-p54 is monomeric at basic pH and dimeric at acidic pH; dimerization is driven by the N-terminal prodomain (p31). It depends on Ca(2+) as a cofactor. The prodomain (p31) is cleaved, probably by autocatalysis, during the transport to or in the Golgi apparatus, and remains non-covalently associated with the p54 form as an inhibitor. p54 is further cleaved into the p47 form. The p54-to-p47 conversion can be also autocatalytic. This cleavage is likely occurring in the exoneme prior to egress and is mediated by PMX/plasmepsin X. Heterodimer p31-p54 is activated by cleavage of prodomain (p31) by the aspartic protease PMX; cleavage by PMX abolishes inhibitory capacity of p31. Primary autocatalytic processing of SUB1 is essential for parasite growth; the p54-to-p47 conversion is dispensable for SUB1 functions in the parasites. In terms of processing, the disulfide bond between Cys-521 and Cys-534 acts as a redox-sensitive disulfide switch. The oxidized form is required for catalytic activity. Post-translationally, the relevance of the N-glycosylation is not clear. In an insect expression system, SUB1 glycosylation appears to affect its processing into the active mature form suggesting that SUB1 may not be N-glycosylated in parasites.

The protein localises to the secreted. It is found in the parasitophorous vacuole lumen. It catalyses the reaction Hydrolysis of proteins with broad specificity for peptide bonds, and a preference for a large uncharged residue in P1. Hydrolyzes peptide amides.. With respect to regulation, p54 and probably p47 forms are inhibited by the non-covalent interaction with the cleaved propeptide. Inhibited by subtilisin propeptide-like protein SUB1-ProM. Inhibited by small molecule MRT12113. Its function is as follows. Serine protease which plays an essential role in merozoite invasion of and egress from host erythrocytes by processing and activating various merozoite surface and parasitophorous vacuole proteins. Mediates the proteolytic maturation of serine proteases SERA4, SERA5 and SERA6 just prior to merozoite egress. Prior to merozoite egress, cleaves merozoite surface proteins MSP1, MSP6 and MSP7, which form the MSP1/6/7 complex, and thereby may prime the parasite cell surface for invasion of fresh erythrocytes. Prior to merozoite egress, cleaves MSRP2 converting it to MSRP2 p25 form, and RAP1 converting it to RAP1 p67 form. The sequence is that of Subtilisin-like protease 1 from Plasmodium falciparum (isolate 3D7).